A 575-amino-acid chain; its full sequence is Transcription factor coe2 (575 aa).

The segment at 63–66 (RKSN) is interaction with DNA. Residues 151 to 170 (CRVLLTHEVMCSRCCEKKSC) form a C5-type zinc finger. Interaction with DNA stretches follow at residues 197 to 204 (NCLKTAGN) and 236 to 239 (NNSK). The IPT/TIG domain maps to 254–336 (PCIKAISPSE…CKGAPGRFIY (83 aa)). The disordered stretch occupies residues 450-487 (IRNTSSISPRGYSSSSTPQQSNYSTPSNSMNGYSNVPM). The span at 454-476 (SSISPRGYSSSSTPQQSNYSTPS) shows a compositional bias: low complexity. Polar residues predominate over residues 477–487 (NSMNGYSNVPM).

The protein belongs to the COE family.

Its subcellular location is the nucleus. In terms of biological role, may play a pivotal role in the transcriptional cascade that specifies primary neurons in embryos. Stabilizes the higher neural potential of selected progenitor cells that express neurog2/X-ngnr-1 by maintaining Delta-Notch signaling. Thus ensures the transition between neural competence and irreversible commitment to a neural fate. Also promotes neuronal differentiation by activating neurod1 expression, directly or indirectly. This is Transcription factor coe2 from Xenopus tropicalis (Western clawed frog).